Consider the following 340-residue polypeptide: MKYTQYPNSSKLKRNSDRREHDEKLSDELHNQSTIYEDEELSRAEYDSDSDSSVEDSTDNENSGKEMDEKSYEKNEDHVEDHRKRKKSKIQLLDIAEFKKENLADLDYQIGNSESKVEKGVNIEPFNIDDEIKHGVFDKDGNYIKTENATENDQQDNEEWMNDVINTEEVNRLEKEQSVKTQNSRHYMVHEALNLLKFFLVDENETVLESLGRLNKLRKIAISKKNKSLKYVIHGIELLSDLINILEKKGFSEVYEYNRLKVQDAIEEEIFDDSSRIVNHKTKLWGFKWLNKLDEYHGLYTNYEMSYWQKSYFKNSVIVKFHSEPDRDENWIHVSCLSFM.

The segment covering 1–10 (MKYTQYPNSS) has biased composition (polar residues). Residues 1-86 (MKYTQYPNSS…DHVEDHRKRK (86 aa)) form a disordered region. Residues 14–30 (RNSDRREHDEKLSDELH) are compositionally biased toward basic and acidic residues. Over residues 47–59 (DSDSDSSVEDSTD) the composition is skewed to acidic residues. Positions 62–82 (NSGKEMDEKSYEKNEDHVEDH) are enriched in basic and acidic residues. A GYF domain is found at 282-340 (TKLWGFKWLNKLDEYHGLYTNYEMSYWQKSYFKNSVIVKFHSEPDRDENWIHVSCLSFM).

The protein belongs to the LIN1 family. In terms of assembly, interacts with the cohesin subunit IRR1. Interacts with PRP8, HEX3, NFI1, WSS1, RFC1 and YJL149W.

It localises to the nucleus. This is Protein LIN1 (LIN1) from Saccharomyces cerevisiae (strain ATCC 204508 / S288c) (Baker's yeast).